Consider the following 495-residue polypeptide: UDP-N-acetylmuramoyl-L-alanyl-D-glutamate--2,6-diaminopimelate ligase (495 aa).

UDP-N-acetyl-alpha-D-muramoyl-L-alanyl-D-glutamate contacts are provided by residues L27, S29, and 44-46 (HQA). 116–122 (GTNGKTT) lines the ATP pocket. Residues N157, 158-159 (TT), S185, Q191, and R193 each bind UDP-N-acetyl-alpha-D-muramoyl-L-alanyl-D-glutamate. K225 is subject to N6-carboxylysine. Meso-2,6-diaminopimelate-binding positions include R390, 414–417 (DNPR), G465, and E469. A Meso-diaminopimelate recognition motif motif is present at residues 414 to 417 (DNPR).

It belongs to the MurCDEF family. MurE subfamily. Requires Mg(2+) as cofactor. Carboxylation is probably crucial for Mg(2+) binding and, consequently, for the gamma-phosphate positioning of ATP.

The protein localises to the cytoplasm. The catalysed reaction is UDP-N-acetyl-alpha-D-muramoyl-L-alanyl-D-glutamate + meso-2,6-diaminopimelate + ATP = UDP-N-acetyl-alpha-D-muramoyl-L-alanyl-gamma-D-glutamyl-meso-2,6-diaminopimelate + ADP + phosphate + H(+). It participates in cell wall biogenesis; peptidoglycan biosynthesis. Its function is as follows. Catalyzes the addition of meso-diaminopimelic acid to the nucleotide precursor UDP-N-acetylmuramoyl-L-alanyl-D-glutamate (UMAG) in the biosynthesis of bacterial cell-wall peptidoglycan. In Salmonella typhimurium (strain LT2 / SGSC1412 / ATCC 700720), this protein is UDP-N-acetylmuramoyl-L-alanyl-D-glutamate--2,6-diaminopimelate ligase.